Consider the following 446-residue polypeptide: Argininosuccinate synthase (446 aa).

ATP is bound by residues 17 to 25 and Ala43; that span reads AFSGGLDTS. Tyr99 lines the L-citrulline pocket. Positions 129 and 131 each coordinate ATP. L-aspartate-binding residues include Thr131, Asn135, and Asp136. Residue Asn135 coordinates L-citrulline. Asp136 contacts ATP. L-citrulline-binding residues include Arg139 and Ser192. An ATP-binding site is contributed by Asp194. Residues Thr201, Glu203, and Glu280 each coordinate L-citrulline.

It belongs to the argininosuccinate synthase family. Type 2 subfamily. As to quaternary structure, homotetramer.

It localises to the cytoplasm. It catalyses the reaction L-citrulline + L-aspartate + ATP = 2-(N(omega)-L-arginino)succinate + AMP + diphosphate + H(+). The protein operates within amino-acid biosynthesis; L-arginine biosynthesis; L-arginine from L-ornithine and carbamoyl phosphate: step 2/3. In Variovorax paradoxus (strain S110), this protein is Argininosuccinate synthase.